We begin with the raw amino-acid sequence, 156 residues long: Arginine repressor (156 aa).

It belongs to the ArgR family.

Its subcellular location is the cytoplasm. Its pathway is amino-acid biosynthesis; L-arginine biosynthesis [regulation]. Regulates arginine biosynthesis genes. The protein is Arginine repressor of Shigella boydii serotype 18 (strain CDC 3083-94 / BS512).